A 169-amino-acid chain; its full sequence is ATP synthase subunit b (169 aa).

The helical transmembrane segment at 11–31 (IPSFIAQVVNFGLLLGLLYLF) threads the bilayer.

Belongs to the ATPase B chain family. In terms of assembly, F-type ATPases have 2 components, F(1) - the catalytic core - and F(0) - the membrane proton channel. F(1) has five subunits: alpha(3), beta(3), gamma(1), delta(1), epsilon(1). F(0) has three main subunits: a(1), b(2) and c(10-14). The alpha and beta chains form an alternating ring which encloses part of the gamma chain. F(1) is attached to F(0) by a central stalk formed by the gamma and epsilon chains, while a peripheral stalk is formed by the delta and b chains.

The protein resides in the cell membrane. Its function is as follows. F(1)F(0) ATP synthase produces ATP from ADP in the presence of a proton or sodium gradient. F-type ATPases consist of two structural domains, F(1) containing the extramembraneous catalytic core and F(0) containing the membrane proton channel, linked together by a central stalk and a peripheral stalk. During catalysis, ATP synthesis in the catalytic domain of F(1) is coupled via a rotary mechanism of the central stalk subunits to proton translocation. Functionally, component of the F(0) channel, it forms part of the peripheral stalk, linking F(1) to F(0). The chain is ATP synthase subunit b from Dehalococcoides mccartyi (strain ATCC BAA-2266 / KCTC 15142 / 195) (Dehalococcoides ethenogenes (strain 195)).